Consider the following 390-residue polypeptide: Glucose-fructose oxidoreductase domain-containing protein 1 (390 aa).

A signal peptide spans 1 to 21 (MLPGVGVFGTSLTARVIIPLL).

It belongs to the Gfo/Idh/MocA family. As to quaternary structure, homodimer. Interacts with NKIRAS2.

It is found in the secreted. Functionally, probably catalytically inactive enzyme. Does not bind NAD or NADP. In Mus musculus (Mouse), this protein is Glucose-fructose oxidoreductase domain-containing protein 1 (Gfod1).